A 287-amino-acid polypeptide reads, in one-letter code: ATP synthase gamma chain (287 aa).

The protein belongs to the ATPase gamma chain family. F-type ATPases have 2 components, CF(1) - the catalytic core - and CF(0) - the membrane proton channel. CF(1) has five subunits: alpha(3), beta(3), gamma(1), delta(1), epsilon(1). CF(0) has three main subunits: a, b and c.

The protein localises to the cell inner membrane. Produces ATP from ADP in the presence of a proton gradient across the membrane. The gamma chain is believed to be important in regulating ATPase activity and the flow of protons through the CF(0) complex. The sequence is that of ATP synthase gamma chain from Escherichia coli (strain 55989 / EAEC).